A 294-amino-acid polypeptide reads, in one-letter code: Ribosomal RNA small subunit methyltransferase A (294 aa).

The S-adenosyl-L-methionine site is built by asparagine 31, leucine 33, glycine 58, glutamate 79, aspartate 111, and asparagine 136.

It belongs to the class I-like SAM-binding methyltransferase superfamily. rRNA adenine N(6)-methyltransferase family. RsmA subfamily.

The protein localises to the cytoplasm. It catalyses the reaction adenosine(1518)/adenosine(1519) in 16S rRNA + 4 S-adenosyl-L-methionine = N(6)-dimethyladenosine(1518)/N(6)-dimethyladenosine(1519) in 16S rRNA + 4 S-adenosyl-L-homocysteine + 4 H(+). Specifically dimethylates two adjacent adenosines (A1518 and A1519) in the loop of a conserved hairpin near the 3'-end of 16S rRNA in the 30S particle. May play a critical role in biogenesis of 30S subunits. The sequence is that of Ribosomal RNA small subunit methyltransferase A from Lactobacillus helveticus (strain DPC 4571).